The following is a 138-amino-acid chain: Transcription antitermination protein NusB (138 aa).

The protein belongs to the NusB family.

Functionally, involved in transcription antitermination. Required for transcription of ribosomal RNA (rRNA) genes. Binds specifically to the boxA antiterminator sequence of the ribosomal RNA (rrn) operons. The protein is Transcription antitermination protein NusB of Leptospira interrogans serogroup Icterohaemorrhagiae serovar copenhageni (strain Fiocruz L1-130).